A 263-amino-acid polypeptide reads, in one-letter code: UDP-N-acetylenolpyruvoylglucosamine reductase (263 aa).

Residue arginine 146 is part of the active site. Serine 188 acts as the Proton donor in catalysis. Glutamate 258 is an active-site residue.

This sequence belongs to the MurB family. Requires FAD as cofactor.

The protein resides in the cytoplasm. The enzyme catalyses UDP-N-acetyl-alpha-D-muramate + NADP(+) = UDP-N-acetyl-3-O-(1-carboxyvinyl)-alpha-D-glucosamine + NADPH + H(+). It participates in cell wall biogenesis; peptidoglycan biosynthesis. In terms of biological role, cell wall formation. In Helicobacter hepaticus (strain ATCC 51449 / 3B1), this protein is UDP-N-acetylenolpyruvoylglucosamine reductase.